The primary structure comprises 345 residues: UbiA prenyltransferase domain-containing protein 1 (345 aa).

8 helical membrane passes run 60–80, 90–110, 141–161, 169–189, 213–233, 251–273, 285–305, and 324–344; these read LALR…GTAI, LLLF…GNLV, VRFG…LYFI, LALI…GIGF, AVQV…LALS, QAGI…YNLL, ATRY…AFSL, and LNLL…AGSL.

Belongs to the UbiA prenyltransferase family.

It is found in the endoplasmic reticulum membrane. Its subcellular location is the golgi apparatus membrane. The protein localises to the mitochondrion membrane. The enzyme catalyses menadiol + (2E,6E,10E)-geranylgeranyl diphosphate = menaquinol-4 + diphosphate. It carries out the reaction all-trans-decaprenyl diphosphate + 4-hydroxybenzoate = 4-hydroxy-3-(all-trans-decaprenyl)benzoate + diphosphate. The protein operates within quinol/quinone metabolism; menaquinone biosynthesis. It functions in the pathway cofactor biosynthesis; ubiquinone biosynthesis. Prenyltransferase that mediates the formation of menaquinone-4 (MK-4) and coenzyme Q10. MK-4 is a vitamin K2 isoform required for endothelial cell development. Mediates the conversion of phylloquinone (PK) into MK-4, probably by cleaving the side chain of phylloquinone (PK) to release 2-methyl-1,4-naphthoquinone (menadione; K3) and then prenylating it with geranylgeranyl pyrophosphate (GGPP) to form MK-4. Also plays a role in cardiovascular development independently of MK-4 biosynthesis, by acting as a coenzyme Q10 biosynthetic enzyme: coenzyme Q10, also named ubiquinone, plays an important antioxidant role in the cardiovascular system. Mediates biosynthesis of coenzyme Q10 in the Golgi membrane, leading to protect cardiovascular tissues from NOS3/eNOS-dependent oxidative stress. This is UbiA prenyltransferase domain-containing protein 1 (ubiad1) from Xenopus tropicalis (Western clawed frog).